The sequence spans 581 residues: Putative ABC transporter ATP-binding protein MM_1996 (581 aa).

The ABC transporter 1 domain maps to 10-250; that stretch reads IEIRDLWYTY…LEVFHRLGLR (241 aa). 44 to 51 contributes to the ATP binding site; that stretch reads GPTGCGKS. The interval 287–309 is disordered; the sequence is GDYPASPGRKEKTSSPGWSSENN. A compositionally biased stretch (polar residues) spans 300-309; that stretch reads SSPGWSSENN. Residues 313–541 form the ABC transporter 2 domain; that stretch reads VSVRDLWSGY…IDILRKASLT (229 aa). Position 346–353 (346–353) interacts with ATP; it reads GTNGSGKS.

It belongs to the ABC transporter superfamily.

It is found in the cell membrane. In terms of biological role, probably part of an ABC transporter complex. Responsible for energy coupling to the transport system. The chain is Putative ABC transporter ATP-binding protein MM_1996 from Methanosarcina mazei (strain ATCC BAA-159 / DSM 3647 / Goe1 / Go1 / JCM 11833 / OCM 88) (Methanosarcina frisia).